We begin with the raw amino-acid sequence, 625 residues long: MTIKKYTLLTALSVTAFSGWAQGNNTTDNNDEMVVTANRFPQPKSSVLAPVDVVTRADIDRWQSTNINDVLRRLPGVDIAQDGGMGQRSSLFIRGTNSSHVLVLIDGVRLNQAGITGASDLSQIPISLVQRIEYIRGPRSAVYGSDAIGGVINILTGRDKPGTTLSAGLGSNGYQTYDGSTQQKLGEDTTVTLAGNYTYSKGYDVVAGMPGAGGPRQPDRDGFMGKMLWAGLEHQFNEQFNGFARVYGFDNRSDYDGYTNYSNPLALIDTRKLSSRTYDTGLRYKNGIYASQFIASYNRTKDYNYSPLFGQHDITASLDEAEQYNLQWGNTFQLTNGMISAGADWQEQRTERKSSNQNTTADFTQHNTGIYLTGQQQISDVTLEGAVRSDDNSQFGWHSTWQTSAGWEFIDGYRLIGSYGTAYKAPNLMQLYSAYGGNANLKPEESKQWEGGVEGLTGPLTWRLSAYRNDIDQLIDYSNLTNGYFNINKATIKGVEWTGSFDTGPLSHQVTLEYLDPRNADTHEILVRRAKQQVKYQLDWQVADLDWSVTYQYLGQRYDKDYSTYPEETVELGGVSLWDLAVSYPVTSHLTVRGRIANLFDKDYEMVYGYQTPGREYYFTGSYNF.

A signal peptide spans 1 to 21 (MTIKKYTLLTALSVTAFSGWA). Residues 31-38 (DEMVVTAN) carry the TonB box motif. One can recognise a TBDR plug domain in the interval 43–157 (PKSSVLAPVD…IGGVINILTG (115 aa)). Residues Ser-90, Asn-97, and 115-116 (IT) contribute to the cyanocob(III)alamin site. Positions 160–625 (KPGTTLSAGL…EYYFTGSYNF (466 aa)) constitute a TBDR beta-barrel domain. 3 beta stranded membrane-spanning segments follow: residues 163–170 (TTLSAGLG), 174–183 (YQTYDGSTQQ), and 189–200 (TTVTLAGNYTYS). Positions 204, 217, 219, and 221 each coordinate Ca(2+). 2 beta stranded membrane-spanning segments follow: residues 223-233 (FMGKMLWAGLE) and 238-254 (EQFN…NRSD). The Ca(2+) site is built by Tyr-255, Asp-256, and Asp-269. 14 beta stranded membrane-spanning segments follow: residues 271 to 285 (RKLS…LRYK), 287 to 304 (GIYA…KDYN), 317 to 333 (SLDE…NTFQ), 336 to 345 (NGMISAGADW), 363 to 379 (FTQH…QQIS), 381 to 391 (VTLEGAVRSDD), 395 to 410 (FGWH…WEFI), 413 to 427 (YRLI…KAPN), 445 to 454 (ESKQWEGGVE), 460 to 469 (LTWRLSAYRN), 484 to 501 (YFNI…TGSF), 505 to 520 (PLSH…PRNA), 528 to 540 (RRAK…QLDW), and 546 to 561 (DWSV…YDKD). Ser-317 serves as a coordination point for cyanocob(III)alamin. Residue Arg-528 participates in cyanocob(III)alamin binding. A cyanocob(III)alamin-binding site is contributed by Tyr-562. 3 consecutive transmembrane segments (beta stranded) span residues 569 to 583 (TVEL…LAVS), 596 to 607 (IANLFDKDYEMV), and 613 to 625 (PGRE…SYNF). Positions 608–625 (YGYQTPGREYYFTGSYNF) match the TonB C-terminal box motif.

It belongs to the TonB-dependent receptor family. BtuB (TC 1.B.14.3.1) subfamily.

It localises to the cell outer membrane. Involved in the active translocation of vitamin B12 (cyanocobalamin) across the outer membrane to the periplasmic space. It derives its energy for transport by interacting with the trans-periplasmic membrane protein TonB. The chain is Vitamin B12 transporter BtuB from Yersinia pestis bv. Antiqua (strain Antiqua).